Here is a 148-residue protein sequence, read N- to C-terminus: Ferredoxin-thioredoxin reductase catalytic chain, chloroplastic (148 aa).

A chloroplast-targeting transit peptide spans 1–35; the sequence is MKALQASTSYSFFSKSSSATLQRRTHRPQCVILSK. Residue cysteine 87 participates in [4Fe-4S] cluster binding. Residue cysteine 89 is the Nucleophile of the active site. Cysteine 89 and cysteine 119 are joined by a disulfide. The [4Fe-4S] cluster site is built by cysteine 106, cysteine 108, and cysteine 117.

This sequence belongs to the ferredoxin thioredoxin reductase beta subunit family. In terms of assembly, heterodimer of subunit A (variable subunit) and subunit B (catalytic subunit). Heterodimeric FTR forms a complex with ferredoxin and thioredoxin. Requires [4Fe-4S] cluster as cofactor.

The protein resides in the plastid. It is found in the chloroplast. It catalyses the reaction [thioredoxin]-disulfide + 2 reduced [2Fe-2S]-[ferredoxin] + 2 H(+) = [thioredoxin]-dithiol + 2 oxidized [2Fe-2S]-[ferredoxin]. In terms of biological role, catalytic subunit of the ferredoxin-thioredoxin reductase (FTR), which catalyzes the two-electron reduction of thioredoxins by the electrons provided by reduced ferredoxin. The sequence is that of Ferredoxin-thioredoxin reductase catalytic chain, chloroplastic from Spinacia oleracea (Spinach).